Consider the following 229-residue polypeptide: Cytochrome c oxidase subunit 2 (229 aa).

Residues M1–S14 are Mitochondrial intermembrane-facing. Residues P15–L45 form a helical membrane-spanning segment. The Mitochondrial matrix segment spans residues L46–Q59. Residues E60–M87 form a helical membrane-spanning segment. At D88–S229 the chain is on the mitochondrial intermembrane side. Residues H161, C196, E198, C200, H204, and M207 each contribute to the Cu cation site. E198 contributes to the Mg(2+) binding site.

It belongs to the cytochrome c oxidase subunit 2 family. In terms of assembly, component of the cytochrome c oxidase (complex IV, CIV), a multisubunit enzyme composed of 14 subunits. The complex is composed of a catalytic core of 3 subunits MT-CO1, MT-CO2 and MT-CO3, encoded in the mitochondrial DNA, and 11 supernumerary subunits COX4I, COX5A, COX5B, COX6A, COX6B, COX6C, COX7A, COX7B, COX7C, COX8 and NDUFA4, which are encoded in the nuclear genome. The complex exists as a monomer or a dimer and forms supercomplexes (SCs) in the inner mitochondrial membrane with NADH-ubiquinone oxidoreductase (complex I, CI) and ubiquinol-cytochrome c oxidoreductase (cytochrome b-c1 complex, complex III, CIII), resulting in different assemblies (supercomplex SCI(1)III(2)IV(1) and megacomplex MCI(2)III(2)IV(2)). Found in a complex with TMEM177, COA6, COX18, COX20, SCO1 and SCO2. Interacts with TMEM177 in a COX20-dependent manner. Interacts with COX20. Interacts with COX16. Cu cation is required as a cofactor.

The protein resides in the mitochondrion inner membrane. It catalyses the reaction 4 Fe(II)-[cytochrome c] + O2 + 8 H(+)(in) = 4 Fe(III)-[cytochrome c] + 2 H2O + 4 H(+)(out). Component of the cytochrome c oxidase, the last enzyme in the mitochondrial electron transport chain which drives oxidative phosphorylation. The respiratory chain contains 3 multisubunit complexes succinate dehydrogenase (complex II, CII), ubiquinol-cytochrome c oxidoreductase (cytochrome b-c1 complex, complex III, CIII) and cytochrome c oxidase (complex IV, CIV), that cooperate to transfer electrons derived from NADH and succinate to molecular oxygen, creating an electrochemical gradient over the inner membrane that drives transmembrane transport and the ATP synthase. Cytochrome c oxidase is the component of the respiratory chain that catalyzes the reduction of oxygen to water. Electrons originating from reduced cytochrome c in the intermembrane space (IMS) are transferred via the dinuclear copper A center (CU(A)) of subunit 2 and heme A of subunit 1 to the active site in subunit 1, a binuclear center (BNC) formed by heme A3 and copper B (CU(B)). The BNC reduces molecular oxygen to 2 water molecules using 4 electrons from cytochrome c in the IMS and 4 protons from the mitochondrial matrix. The sequence is that of Cytochrome c oxidase subunit 2 (MT-CO2) from Alligator mississippiensis (American alligator).